We begin with the raw amino-acid sequence, 612 residues long: Sulfite reductase [NADPH] hemoprotein beta-component (612 aa).

The interval 1–26 is disordered; it reads MDDHKPIETPDGPAVDTPGIGARRYE. Positions 469, 475, 514, and 518 each coordinate [4Fe-4S] cluster. C518 provides a ligand contact to siroheme.

It belongs to the nitrite and sulfite reductase 4Fe-4S domain family. In terms of assembly, alpha(8)-beta(8). The alpha component is a flavoprotein, the beta component is a hemoprotein. It depends on siroheme as a cofactor. Requires [4Fe-4S] cluster as cofactor.

It carries out the reaction hydrogen sulfide + 3 NADP(+) + 3 H2O = sulfite + 3 NADPH + 4 H(+). Its pathway is sulfur metabolism; hydrogen sulfide biosynthesis; hydrogen sulfide from sulfite (NADPH route): step 1/1. Functionally, component of the sulfite reductase complex that catalyzes the 6-electron reduction of sulfite to sulfide. This is one of several activities required for the biosynthesis of L-cysteine from sulfate. The protein is Sulfite reductase [NADPH] hemoprotein beta-component of Methylorubrum extorquens (strain PA1) (Methylobacterium extorquens).